The following is a 224-amino-acid chain: Testis-expressed protein 30 (224 aa).

The polypeptide is Testis-expressed protein 30 (TEX30) (Bos taurus (Bovine)).